A 430-amino-acid chain; its full sequence is Adenylosuccinate synthetase (430 aa).

GTP is bound by residues 12 to 18 (GDEGKGK) and 40 to 42 (GHT). The active-site Proton acceptor is D13. The Mg(2+) site is built by D13 and G40. Residues 13–16 (DEGK), 38–41 (NAGH), T128, R142, Q223, T238, and R302 each bind IMP. The active-site Proton donor is H41. 298–304 (TTTGRPR) lines the substrate pocket. GTP is bound by residues R304, 330–332 (LLD), and 412–414 (SVG).

This sequence belongs to the adenylosuccinate synthetase family. In terms of assembly, homodimer. It depends on Mg(2+) as a cofactor.

Its subcellular location is the cytoplasm. It catalyses the reaction IMP + L-aspartate + GTP = N(6)-(1,2-dicarboxyethyl)-AMP + GDP + phosphate + 2 H(+). It functions in the pathway purine metabolism; AMP biosynthesis via de novo pathway; AMP from IMP: step 1/2. Functionally, plays an important role in the de novo pathway of purine nucleotide biosynthesis. Catalyzes the first committed step in the biosynthesis of AMP from IMP. This chain is Adenylosuccinate synthetase, found in Listeria monocytogenes serotype 4a (strain HCC23).